The sequence spans 314 residues: Epithelial cell adhesion molecule (314 aa).

The N-terminal stretch at 1 to 23 (MAPPQVLAFGLLLAAATAAVAAA) is a signal peptide. Over 24–265 (QQGCVCENYK…PPEFSMQGLQ (242 aa)) the chain is Extracellular. 6 disulfide bridges follow: Cys-27–Cys-46, Cys-29–Cys-59, Cys-38–Cys-48, Cys-66–Cys-99, Cys-110–Cys-116, and Cys-118–Cys-135. Asn-37 carries an N-linked (GlcNAc...) asparagine glycan. In terms of domain architecture, Thyroglobulin type-1 spans 63–135 (ASKCLVMKAE…RTDKDSEISC (73 aa)). Asn-111 carries an N-linked (GlcNAc...) asparagine glycan. Asn-198 is a glycosylation site (N-linked (GlcNAc...) asparagine). Residues 266-288 (AGIIAVIAVVAIAIVAGIIVLIV) traverse the membrane as a helical segment. Residues 289–314 (STKKRRAKYEKAEIKEMGEMHRELNA) are Cytoplasmic-facing.

It belongs to the EPCAM family. In terms of assembly, monomer. Interacts with phosphorylated CLDN7. Post-translationally, glycosylation at Asn-198 is crucial for protein stability.

The protein resides in the lateral cell membrane. It is found in the cell junction. Its subcellular location is the tight junction. May act as a physical homophilic interaction molecule between intestinal epithelial cells (IECs) and intraepithelial lymphocytes (IELs) at the mucosal epithelium for providing immunological barrier as a first line of defense against mucosal infection. Plays a role in embryonic stem cells proliferation and differentiation. Up-regulates the expression of FABP5, MYC and cyclins A and E. The chain is Epithelial cell adhesion molecule (TACSTD1) from Sus scrofa (Pig).